A 498-amino-acid polypeptide reads, in one-letter code: ATP synthase subunit beta, chloroplastic (498 aa).

Residue 172–179 coordinates ATP; that stretch reads GGAGVGKT.

This sequence belongs to the ATPase alpha/beta chains family. F-type ATPases have 2 components, CF(1) - the catalytic core - and CF(0) - the membrane proton channel. CF(1) has five subunits: alpha(3), beta(3), gamma(1), delta(1), epsilon(1). CF(0) has four main subunits: a(1), b(1), b'(1) and c(9-12).

The protein resides in the plastid. Its subcellular location is the chloroplast thylakoid membrane. The enzyme catalyses ATP + H2O + 4 H(+)(in) = ADP + phosphate + 5 H(+)(out). Functionally, produces ATP from ADP in the presence of a proton gradient across the membrane. The catalytic sites are hosted primarily by the beta subunits. The polypeptide is ATP synthase subunit beta, chloroplastic (Asarum canadense (Wild ginger)).